Here is a 394-residue protein sequence, read N- to C-terminus: Actin-related protein 2 (394 aa).

Methionine 1 bears the N-acetylmethionine mark. Residues 160–162 (GDG) and 214–218 (RMIKE) each bind ATP. Position 299 is an N6-acetyllysine (lysine 299). An ATP-binding site is contributed by 305-310 (GGSTMY). N6-acetyllysine is present on lysine 322.

The protein belongs to the actin family. ARP2 subfamily. Component of the Arp2/3 complex composed of ACTR2/ARP2, ACTR3/ARP3, ARPC1B/p41-ARC, ARPC2/p34-ARC, ARPC3/p21-ARC, ARPC4/p20-ARC and ARPC5/p16-ARC. Interacts with AVIL.

The protein localises to the cytoplasm. It localises to the cytoskeleton. Its subcellular location is the cell projection. It is found in the nucleus. Functionally, ATP-binding component of the Arp2/3 complex, a multiprotein complex that mediates actin polymerization upon stimulation by nucleation-promoting factor (NPF). The Arp2/3 complex mediates the formation of branched actin networks in the cytoplasm, providing the force for cell motility. Seems to contact the pointed end of the daughter actin filament. In podocytes, required for the formation of lamellipodia downstream of AVIL and PLCE1 regulation. In addition to its role in the cytoplasmic cytoskeleton, the Arp2/3 complex also promotes actin polymerization in the nucleus, thereby regulating gene transcription and repair of damaged DNA. The Arp2/3 complex promotes homologous recombination (HR) repair in response to DNA damage by promoting nuclear actin polymerization, leading to drive motility of double-strand breaks (DSBs). The sequence is that of Actin-related protein 2 (ACTR2) from Bos taurus (Bovine).